We begin with the raw amino-acid sequence, 126 residues long: Glycine cleavage system H protein (126 aa).

The Lipoyl-binding domain maps to 22–104 (VATVGITEYA…YEKAWMVKIE (83 aa)). Lys63 bears the N6-lipoyllysine mark.

Belongs to the GcvH family. The glycine cleavage system is composed of four proteins: P, T, L and H. Requires (R)-lipoate as cofactor.

Functionally, the glycine cleavage system catalyzes the degradation of glycine. The H protein shuttles the methylamine group of glycine from the P protein to the T protein. Is also involved in protein lipoylation via its role as an octanoyl/lipoyl carrier protein intermediate. This Staphylococcus epidermidis (strain ATCC 12228 / FDA PCI 1200) protein is Glycine cleavage system H protein.